The primary structure comprises 389 residues: Succinate--CoA ligase [ADP-forming] subunit beta (389 aa).

Residues 9-244 (KQLLAEYGIP…KTQEDETEVT (236 aa)) form the ATP-grasp domain. Residues Lys46, 53-55 (GRG), Gly102, and Glu107 contribute to the ATP site. Positions 199 and 213 each coordinate Mg(2+). Substrate-binding positions include Asn264 and 321-323 (GIV).

Belongs to the succinate/malate CoA ligase beta subunit family. As to quaternary structure, heterotetramer of two alpha and two beta subunits. Mg(2+) serves as cofactor.

The catalysed reaction is succinate + ATP + CoA = succinyl-CoA + ADP + phosphate. The enzyme catalyses GTP + succinate + CoA = succinyl-CoA + GDP + phosphate. It participates in carbohydrate metabolism; tricarboxylic acid cycle; succinate from succinyl-CoA (ligase route): step 1/1. Its function is as follows. Succinyl-CoA synthetase functions in the citric acid cycle (TCA), coupling the hydrolysis of succinyl-CoA to the synthesis of either ATP or GTP and thus represents the only step of substrate-level phosphorylation in the TCA. The beta subunit provides nucleotide specificity of the enzyme and binds the substrate succinate, while the binding sites for coenzyme A and phosphate are found in the alpha subunit. This is Succinate--CoA ligase [ADP-forming] subunit beta from Xanthomonas euvesicatoria pv. vesicatoria (strain 85-10) (Xanthomonas campestris pv. vesicatoria).